We begin with the raw amino-acid sequence, 105 residues long: uncharacterized protein (105 aa).

The helical transmembrane segment at 8–28 threads the bilayer; sequence FMTAGIIIALIIAVLAPFLAS. Positions 32 to 53 are disordered; the sequence is DGLESTAEKVMPNPETEPVLES. A helical membrane pass occupies residues 72 to 92; the sequence is VSMVIGTILVLAIAYGVGAVF.

The protein to M.jannaschii MJ1570.

It localises to the cell membrane. This is an uncharacterized protein from Methanothermobacter thermautotrophicus (strain ATCC 29096 / DSM 1053 / JCM 10044 / NBRC 100330 / Delta H) (Methanobacterium thermoautotrophicum).